The primary structure comprises 209 residues: Probable septum site-determining protein MinC (209 aa).

It belongs to the MinC family. Interacts with MinD and FtsZ.

Its function is as follows. Cell division inhibitor that blocks the formation of polar Z ring septums. Rapidly oscillates between the poles of the cell to destabilize FtsZ filaments that have formed before they mature into polar Z rings. Prevents FtsZ polymerization. This Clostridium kluyveri (strain NBRC 12016) protein is Probable septum site-determining protein MinC.